Consider the following 64-residue polypeptide: Large ribosomal subunit protein bL28 (64 aa).

Belongs to the bacterial ribosomal protein bL28 family.

This chain is Large ribosomal subunit protein bL28, found in Desulfotalea psychrophila (strain LSv54 / DSM 12343).